The sequence spans 196 residues: uncharacterized protein (196 aa).

The first 23 residues, 1 to 23 (MSARAPKELRLALPPCLLNRTFA), serve as a signal peptide directing secretion. Asn-19 and Asn-26 each carry an N-linked (GlcNAc...) asparagine glycan. Residues 24–60 (SHNASGGSNAGIRSSGAGGGTCITQVGQQLFQSFSST) lie on the Extracellular side of the membrane. The chain crosses the membrane as a helical span at residues 61 to 81 (LVLIVLVTLIFCLIVLSLSTF). The Cytoplasmic segment spans residues 82–196 (HIHKRRMKKR…EGLLQTVVLS (115 aa)). Positions 93–184 (MQRAQEEYER…AHAASSCLDT (92 aa)) are disordered. Composition is skewed to basic and acidic residues over residues 95 to 106 (RAQEEYERDHCS) and 124 to 135 (HGKETRLERQPR). Pro residues predominate over residues 161–171 (CAPPPPPPVPS). Over residues 172–181 (PHGAHAASSC) the composition is skewed to low complexity.

Its subcellular location is the membrane. This is an uncharacterized protein from Rattus norvegicus (Rat).